Here is a 356-residue protein sequence, read N- to C-terminus: tRNA N6-adenosine threonylcarbamoyltransferase (356 aa).

Fe cation contacts are provided by H115 and H119. Residues 138 to 142 (LVSGG), D171, G184, and N283 contribute to the substrate site. Fe cation is bound at residue D311.

Belongs to the KAE1 / TsaD family. It depends on Fe(2+) as a cofactor.

The protein resides in the cytoplasm. It catalyses the reaction L-threonylcarbamoyladenylate + adenosine(37) in tRNA = N(6)-L-threonylcarbamoyladenosine(37) in tRNA + AMP + H(+). In terms of biological role, required for the formation of a threonylcarbamoyl group on adenosine at position 37 (t(6)A37) in tRNAs that read codons beginning with adenine. Is involved in the transfer of the threonylcarbamoyl moiety of threonylcarbamoyl-AMP (TC-AMP) to the N6 group of A37, together with TsaE and TsaB. TsaD likely plays a direct catalytic role in this reaction. The sequence is that of tRNA N6-adenosine threonylcarbamoyltransferase from Prochlorococcus marinus (strain MIT 9515).